Consider the following 600-residue polypeptide: MSTLTRFSVQPLSTMTRRLADVASARREPDLVIQGARVLSTYSERFLDGREVWISGGRIAAVKPAGSYRGGSAKLYDARGGIIAPGLVDPHIHIESSMVTACAYAEAALLNGTTTIFCDSHEIGNVMDVAGVEAMLEDARQAPLSIFLTVPSTVPATTPDLETAGGDLTPDKIAALFDKWPEAVALGEKMDFVPVAMGDERSHAILAAALGRGRPVSGHVYGREFVAAYAASGVTDTHEAIDRGIADDLLEAGVWIFLRGGPPTTPWHSLPQAIKTITELGASHKRVAVCTDDRDAEDLLAFGLDWVTREAVKYGMRPEEAWAMGSLHGATRFGMEGEIGGLGGGRRADLVLLSDDLTPVSTWYGGKLVVDSKKITPILDEALSKPYRYPDAAYHTVKLPKNLKLTPDLPTETVVAHTIKTELPGITLGHVTVTLEPANDWQAHFDKHDLCFVTVVERHGKSAGNVAHGLLNGFGLRQGAVASSVGHDSHNIIVAGTNAADMQVALDAIEEKQGGVCVVMDGKVTAMVPLPIAGLLSDKRVHQVADEVKALKLEWEKAGCTIAYMGFNLIPLSVIPEIRITDKGLVLVPEMVISPLFEKA.

Belongs to the metallo-dependent hydrolases superfamily. Adenine deaminase family. Requires Mn(2+) as cofactor.

It carries out the reaction adenine + H2O + H(+) = hypoxanthine + NH4(+). The sequence is that of Adenine deaminase 3 from Rhizobium johnstonii (strain DSM 114642 / LMG 32736 / 3841) (Rhizobium leguminosarum bv. viciae).